A 543-amino-acid polypeptide reads, in one-letter code: RuBisCO large subunit-binding protein subunit alpha, chloroplastic (543 aa).

The transit peptide at 1–2 directs the protein to the chloroplast; that stretch reads GA.

This sequence belongs to the chaperonin (HSP60) family. As to quaternary structure, oligomer of probably six alpha and six beta subunits.

It is found in the plastid. The protein localises to the chloroplast. Its function is as follows. This protein binds RuBisCO small and large subunits and is implicated in the assembly of the enzyme oligomer. This is RuBisCO large subunit-binding protein subunit alpha, chloroplastic from Triticum aestivum (Wheat).